Consider the following 101-residue polypeptide: Putative RNA-binding protein RbpA (101 aa).

The region spanning 2–79 (SIYVGNLSYD…RDLKVNKAKP (78 aa)) is the RRM domain. Residues 73–83 (KVNKAKPRENR) are compositionally biased toward basic and acidic residues. Residues 73–101 (KVNKAKPRENRSGGGSFGGGRKSYGGSRY) are disordered. Gly residues predominate over residues 84–101 (SGGGSFGGGRKSYGGSRY).

The protein is Putative RNA-binding protein RbpA (rbpA) of Synechocystis sp. (strain ATCC 27184 / PCC 6803 / Kazusa).